Consider the following 280-residue polypeptide: UDP-3-O-acyl-N-acetylglucosamine deacetylase (280 aa).

Histidine 77, histidine 238, and aspartate 242 together coordinate Zn(2+). Residue histidine 265 is the Proton donor of the active site.

The protein belongs to the LpxC family. Zn(2+) is required as a cofactor.

It carries out the reaction a UDP-3-O-[(3R)-3-hydroxyacyl]-N-acetyl-alpha-D-glucosamine + H2O = a UDP-3-O-[(3R)-3-hydroxyacyl]-alpha-D-glucosamine + acetate. It functions in the pathway glycolipid biosynthesis; lipid IV(A) biosynthesis; lipid IV(A) from (3R)-3-hydroxytetradecanoyl-[acyl-carrier-protein] and UDP-N-acetyl-alpha-D-glucosamine: step 2/6. Functionally, catalyzes the hydrolysis of UDP-3-O-myristoyl-N-acetylglucosamine to form UDP-3-O-myristoylglucosamine and acetate, the committed step in lipid A biosynthesis. This is UDP-3-O-acyl-N-acetylglucosamine deacetylase from Nostoc sp. (strain PCC 7120 / SAG 25.82 / UTEX 2576).